The following is a 275-amino-acid chain: Peptidoglycan-N-acetylglucosamine deacetylase BC_1960 (275 aa).

The NodB homology domain occupies 81 to 262; sequence AEVALTFDDG…QLKTKGARFV (182 aa). The active-site Proton acceptor is the D88. Residues D89, H139, and H143 each contribute to the Zn(2+) site. P179 is subject to 2-hydroxyproline; partial. The active-site Proton donor is H233.

The protein belongs to the polysaccharide deacetylase family. Zn(2+) is required as a cofactor. In terms of processing, hydroxylated on Pro-179. Hydroxylation alters the active site and enhances significantly deacetylase activity, probably by creating a more favorable environment for transition-state stabilization. It might be autocatalytic.

The catalysed reaction is peptidoglycan-N-acetyl-D-glucosamine + H2O = peptidoglycan-D-glucosamine + acetate.. With respect to regulation, deacetylase activity is stimulated by hydroxylation on Pro-179. Inhibited by CuCl(2) and ZnCl(2). Inhibited by the hydroxamate N-hydroxy-4-(naphthalene-1-yl)benzamide (NHNB). Its function is as follows. Catalyzes the deacetylation of N-acetylglucosamine (GlcNAc) residues in peptidoglycan. Also acts on soluble chitin substrates and N-acetylchitooligomers. Acts on cell wall peptidoglycan from the Gram-positive bacteria B.cereus and B.subtilis and the Gram-negative bacterium H.pylori. Not active on acetylated xylan. The polypeptide is Peptidoglycan-N-acetylglucosamine deacetylase BC_1960 (Bacillus cereus (strain ATCC 14579 / DSM 31 / CCUG 7414 / JCM 2152 / NBRC 15305 / NCIMB 9373 / NCTC 2599 / NRRL B-3711)).